Here is a 449-residue protein sequence, read N- to C-terminus: tRNA(Ile)-lysidine synthase (449 aa).

35-40 (SGGIDS) serves as a coordination point for ATP.

Belongs to the tRNA(Ile)-lysidine synthase family.

It is found in the cytoplasm. The catalysed reaction is cytidine(34) in tRNA(Ile2) + L-lysine + ATP = lysidine(34) in tRNA(Ile2) + AMP + diphosphate + H(+). Ligates lysine onto the cytidine present at position 34 of the AUA codon-specific tRNA(Ile) that contains the anticodon CAU, in an ATP-dependent manner. Cytidine is converted to lysidine, thus changing the amino acid specificity of the tRNA from methionine to isoleucine. The chain is tRNA(Ile)-lysidine synthase from Coxiella burnetii (strain RSA 493 / Nine Mile phase I).